A 159-amino-acid chain; its full sequence is MSNPGDVRPVPHRSKVCRCLFGPVDSEQLRRDCDALMAGCLQEARERWNFDFVTETPLEGNFVWERVRSLGLPKVYLSPGSRSRDDLGGDKRPSTSSALLQGPAPEDHVALSLSCTLVSERPEDSPGGPGTSQGRKRRQTSLTDFYHSKRRLVFCKRKP.

Ser2 is modified (N-acetylserine). A Glycyl serine ester (Ser-Gly) (interchain with G-Cter in ubiquitin) cross-link involves residue Ser2. Residues His12–Cys40 form a C4-type zinc finger. The tract at residues Cys17–Val24 is required for binding cyclins. The segment at Val53 to Leu58 is required for binding CDKs. Ser78 bears the Phosphoserine; by NUAK1 mark. Residues Ser78–Glu106 are disordered. A compositionally biased stretch (basic and acidic residues) spans Arg82–Pro93. The residue at position 112 (Ser112) is a Phosphoserine; by GSK3-beta. A disordered region spans residues Val118–Leu142. The residue at position 125 (Ser125) is a Phosphoserine. The short motif at Arg135–Pro159 is the PIP-box K+4 motif element. Phosphothreonine; by PKA, PKB/AKT1, PIM1 and PIM2 is present on Thr140. The residue at position 141 (Ser141) is a Phosphoserine; by NUAK1. An interaction with TRIM39 region spans residues His147–Pro159.

This sequence belongs to the CDI family. In terms of assembly, interacts with HDAC1; the interaction is prevented by competitive binding of C10orf90/FATS to HDAC1 facilitating acetylation and protein stabilization of CDKN1A/p21. Interacts with MKRN1. Interacts with PSMA3. Interacts with PCNA. Component of the ternary complex, cyclin D-CDK4-CDKN1A. Interacts (via its N-terminal domain) with CDK4; the interaction promotes the assembly of the cyclin D-CDK4 complex, its nuclear translocation and promotes the cyclin D-dependent enzyme activity of CDK4. Binding to CDK2 leads to CDK2/cyclin E inactivation at the G1-S phase DNA damage checkpoint, thereby arresting cells at the G1-S transition during DNA repair. Interacts with PIM1. Interacts with STK11. Interacts with NUAK1. Interacts with DTL and TRIM39. Interacts with PKP3; the interaction sequesters CDKN1A to the cytoplasm thereby repressing its role as an inhibitor of CDK4- and CDK6-driven RB1 phosphorylation. Post-translationally, phosphorylation of Thr-140 or Ser-141 impairs binding to PCNA. Phosphorylation at Ser-112 by GSK3-beta enhances ubiquitination by the DCX(DTL) complex. Phosphorylation of Thr-140 by PIM2 enhances its stability and inhibits cell proliferation. Phosphorylation of Thr-140 by PIM1 results in the relocation of CDKN1A to the cytoplasm and enhanced CDKN1A protein stability. UV radiation-induced phosphorylation at Ser-78 and Ser-141 by NUAK1 leads to its degradation. In terms of processing, ubiquitinated by MKRN1; leading to polyubiquitination and 26S proteasome-dependent degradation. Ubiquitinated by the DCX(DTL) complex, also named CRL4(CDT2) complex, leading to its degradation during S phase or following UV irradiation. Ubiquitination by the DCX(DTL) complex is essential to control replication licensing and is PCNA-dependent: interacts with PCNA via its PIP-box, while the presence of the containing the 'K+4' motif in the PIP box, recruit the DCX(DTL) complex, leading to its degradation. Ubiquitination at Ser-2 leads to degradation by the proteasome pathway. Ubiquitinated by RNF114; leading to proteasomal degradation. Acetylation leads to protein stability. Acetylated in vitro on Lys-136, Lys-149, Lys-156 and Lys-158. Deacetylation by HDAC1 is prevented by competitive binding of C10orf90/FATS to HDAC1. As to expression, expressed in keratinocytes (at protein level).

It localises to the cytoplasm. Its subcellular location is the nucleus. Its function is as follows. May be involved in p53/TP53 mediated inhibition of cellular proliferation in response to DNA damage. Binds to and inhibits cyclin-dependent kinase activity, preventing phosphorylation of critical cyclin-dependent kinase substrates and blocking cell cycle progression. Functions in the nuclear localization and assembly of cyclin D-CDK4 complex and promotes its kinase activity towards RB1. At higher stoichiometric ratios, inhibits the kinase activity of the cyclin D-CDK4 complex. Inhibits DNA synthesis by DNA polymerase delta by competing with POLD3 for PCNA binding. Plays an important role in controlling cell cycle progression and DNA damage-induced G2 arrest. Plays an important role in controlling cell cycle progression and DNA damage-induced G2 arrest. Involved in p53/TP53 mediated inhibition of cellular proliferation in response to DNA damage. Also involved in p53-independent DNA damage-induced G2 arrest mediated by CREB3L1 in astrocytes and osteoblasts. Binds to and inhibits cyclin-dependent kinase activity, preventing phosphorylation of critical cyclin-dependent kinase substrates and blocking cell cycle progression. Functions in the nuclear localization and assembly of cyclin D-CDK4 complex and promotes its kinase activity towards RB1. At higher stoichiometric ratios, inhibits the kinase activity of the cyclin D-CDK4 complex. Inhibits DNA synthesis by DNA polymerase delta by competing with POLD3 for PCNA binding. Negatively regulates the CDK4- and CDK6-driven phosphorylation of RB1 in keratinocytes, thereby resulting in the release of E2F1 and subsequent transcription of E2F1-driven G1/S phase promoting genes. In Mus musculus (Mouse), this protein is Cyclin-dependent kinase inhibitor 1 (Cdkn1a).